The sequence spans 88 residues: MKKGIHPENYRTVLFYDSNAKQGFLIRSCARTTTTMKWEDGHEYPVFMCDTSSASHPYYTGKTRQIANEGRASDFVNRYGKFGTLKSK.

Belongs to the bacterial ribosomal protein bL31 family. Type B subfamily. Part of the 50S ribosomal subunit.

The protein is Large ribosomal subunit protein bL31B of Pasteurella multocida (strain Pm70).